We begin with the raw amino-acid sequence, 1091 residues long: Neural cell adhesion molecule 1 (1091 aa).

Positions Met-1–Ser-19 are cleaved as a signal peptide. Ig-like C2-type domains are found at residues Leu-20–Lys-113, Gln-116–Gln-205, Pro-212–His-301, Pro-308–Gln-403, and Pro-406–Val-495. The Extracellular portion of the chain corresponds to Leu-20–Thr-711. 2 disulfide bridges follow: Cys-41-Cys-96 and Cys-139-Cys-189. Residues Lys-152–Arg-156 and Lys-161–Arg-165 contribute to the heparin site. An N-linked (GlcNAc...) asparagine glycan is attached at Asn-222. A disulfide bridge connects residues Cys-235 and Cys-287. N-linked (GlcNAc...) asparagine glycans are attached at residues Asn-315, Asn-347, Asn-423, Asn-449, and Asn-478. The cysteines at positions 329 and 385 are disulfide-linked. A disulfide bridge links Cys-426 with Cys-479. 2 Fibronectin type-III domains span residues Thr-499–Val-598 and Glu-600–Pro-696. A helical transmembrane segment spans residues Ala-712–Val-729. Over Asp-730–Lys-1091 the chain is Cytoplasmic. Disordered stretches follow at residues Gly-756 to Glu-809, Ala-840 to Ser-916, Glu-937 to Lys-1023, and Thr-1041 to Lys-1091. Positions Lys-758–Pro-799 are enriched in basic and acidic residues. Over residues Ser-845–Ser-856 the composition is skewed to low complexity. Composition is skewed to polar residues over residues Asp-904–Ser-916 and Gln-980–Asn-1012. Basic and acidic residues-rich tracts occupy residues Glu-1013–Lys-1023 and Lys-1068–Lys-1091.

In terms of processing, polysialylated by ST8SIA2 and ST8SIA4. Polysialylation modulates cell interactions by confering both attractive and repulsive properties that are highly regulated by ST8SIA2 and ST8SIA4. Polysialylation is formed on a-2,3-linked sialic acid of core glycans.

The protein localises to the cell membrane. In terms of biological role, this protein is a cell adhesion molecule involved in neuron-neuron adhesion, neurite fasciculation, outgrowth of neurites, etc. The protein is Neural cell adhesion molecule 1 of Gallus gallus (Chicken).